The primary structure comprises 262 residues: Phycoerythrobilin:ferredoxin oxidoreductase (262 aa).

It belongs to the HY2 family.

It catalyses the reaction (3Z)-phycoerythrobilin + oxidized 2[4Fe-4S]-[ferredoxin] = 15,16-dihydrobiliverdin + reduced 2[4Fe-4S]-[ferredoxin] + 2 H(+). Functionally, catalyzes the two-electron reduction of the C2 and C3(1) diene system of 15,16-dihydrobiliverdin. The protein is Phycoerythrobilin:ferredoxin oxidoreductase (pebB) of Parasynechococcus marenigrum (strain WH8102).